We begin with the raw amino-acid sequence, 64 residues long: Large ribosomal subunit protein bL35 (64 aa).

Over residues 1–14 (MKNKTHKGTAKRVK) the composition is skewed to basic residues. The interval 1–29 (MKNKTHKGTAKRVKVTGSGKLVREQANRR) is disordered.

This sequence belongs to the bacterial ribosomal protein bL35 family.

The sequence is that of Large ribosomal subunit protein bL35 from Corynebacterium glutamicum (strain R).